The primary structure comprises 447 residues: Multicopper oxidase mco (447 aa).

Positions 1 to 25 (MMNMKEDKKNTMDMKNMKHHDERKK) are enriched in basic and acidic residues. A disordered region spans residues 1 to 28 (MMNMKEDKKNTMDMKNMKHHDERKKLNS). The Cu cation site is built by histidine 107, histidine 109, histidine 147, histidine 149, histidine 375, histidine 378, histidine 380, histidine 428, cysteine 429, histidine 430, histidine 434, and methionine 439.

Belongs to the multicopper oxidase family. Cu cation serves as cofactor.

The protein localises to the cytoplasm. May be involved in copper homeostasis and oxidative stress response. The sequence is that of Multicopper oxidase mco (mco) from Staphylococcus epidermidis (strain ATCC 12228 / FDA PCI 1200).